The chain runs to 127 residues: Small ribosomal subunit protein bS6 (127 aa).

Residues 99 to 127 form a disordered region; the sequence is PSPMMKEEKSKSMMPGDAAPAAPAETAAA. Positions 110–127 are enriched in low complexity; that stretch reads SMMPGDAAPAAPAETAAA.

This sequence belongs to the bacterial ribosomal protein bS6 family.

Functionally, binds together with bS18 to 16S ribosomal RNA. In Dechloromonas aromatica (strain RCB), this protein is Small ribosomal subunit protein bS6.